The sequence spans 92 residues: Small ribosomal subunit protein uS19c (92 aa).

The protein belongs to the universal ribosomal protein uS19 family.

It localises to the plastid. It is found in the chloroplast. Its function is as follows. Protein S19 forms a complex with S13 that binds strongly to the 16S ribosomal RNA. This Anthoceros angustus (Hornwort) protein is Small ribosomal subunit protein uS19c (rps19).